Here is a 435-residue protein sequence, read N- to C-terminus: Matrix remodeling-associated protein 8 (435 aa).

A signal peptide spans 1–22 (MEIRCKVLVCHIILLHSATVYL). Topologically, residues 23 to 337 (YSVPASQQNP…QESRLHFFQQ (315 aa)) are extracellular. Ig-like V-type domains are found at residues 32 to 158 (PESV…LNIT) and 156 to 293 (NITK…LSVS). Residues asparagine 41, asparagine 120, asparagine 156, asparagine 245, and asparagine 324 are each glycosylated (N-linked (GlcNAc...) asparagine). A disulfide bridge connects residues cysteine 54 and cysteine 138. Cysteine 187 and cysteine 273 are oxidised to a cystine. A helical membrane pass occupies residues 338-358 (LGYILATLLLFILLLTAVILI). The Cytoplasmic segment spans residues 359 to 435 (TRKHQKRGYA…DLELRKEYCK (77 aa)).

As to quaternary structure, homodimer in cis. Does not appear to form trans-homodimers.

It is found in the cell membrane. In terms of biological role, transmembrane protein which can modulate activity of various signaling pathways, probably via binding to integrin ITGAV:ITGB3. Mediates heterophilic cell-cell interactions in vitro. In Xenopus laevis (African clawed frog), this protein is Matrix remodeling-associated protein 8 (mxra8).